The sequence spans 252 residues: uncharacterized protein (252 aa).

The signal sequence occupies residues 1 to 23 (MKLLKTVPAIVMLAGGMFASLNA). A disordered region spans residues 231-252 (EPPESAPEHTDRRTTLSLGYSM).

This is an uncharacterized protein from Escherichia coli (strain K12).